A 426-amino-acid polypeptide reads, in one-letter code: Crinkler effector protein 4 (426 aa).

Residues 20 to 57 (VEIDDSAKVSKLKKVIKEENPATITCDAKDLQLFLAKK) form an LQLFLAK domain region. The interval 59–107 (DAWLDGAGAAAVELDEHGHPQGCVQMDPTLWVKNPKHFGDNFQPGEGQV) is DWL domain. The short motif at 108–114 (HVLVVVP) is the HVLVXXP motif element. The tract at residues 115–426 (EGVVGSASET…RSIPTLSYFS (312 aa)) is effector domain.

Belongs to the Crinkler effector family.

The protein resides in the secreted. It is found in the host nucleus. Functionally, secreted effector that is critical to pathogenesis by suppressing plant immune responsess. Promotes Phytophthora infection by suppressing the H(2)O(2) accumulation and callose deposition. May induce cell death by regulating expression of cell death-related genes. The sequence is that of Crinkler effector protein 4 from Phytophthora capsici.